The sequence spans 106 residues: Small ribosomal subunit protein uS10 (106 aa).

This sequence belongs to the universal ribosomal protein uS10 family. As to quaternary structure, part of the 30S ribosomal subunit.

In terms of biological role, involved in the binding of tRNA to the ribosomes. This chain is Small ribosomal subunit protein uS10, found in Prochlorococcus marinus (strain MIT 9312).